A 352-amino-acid polypeptide reads, in one-letter code: 4-hydroxy-3-methylbut-2-en-1-yl diphosphate synthase (flavodoxin) (352 aa).

[4Fe-4S] cluster-binding residues include C262, C265, C297, and E304.

The protein belongs to the IspG family. It depends on [4Fe-4S] cluster as a cofactor.

The enzyme catalyses (2E)-4-hydroxy-3-methylbut-2-enyl diphosphate + oxidized [flavodoxin] + H2O + 2 H(+) = 2-C-methyl-D-erythritol 2,4-cyclic diphosphate + reduced [flavodoxin]. It participates in isoprenoid biosynthesis; isopentenyl diphosphate biosynthesis via DXP pathway; isopentenyl diphosphate from 1-deoxy-D-xylulose 5-phosphate: step 5/6. Converts 2C-methyl-D-erythritol 2,4-cyclodiphosphate (ME-2,4cPP) into 1-hydroxy-2-methyl-2-(E)-butenyl 4-diphosphate. The chain is 4-hydroxy-3-methylbut-2-en-1-yl diphosphate synthase (flavodoxin) from Campylobacter concisus (strain 13826).